The sequence spans 887 residues: DNA gyrase subunit A (887 aa).

Positions 35 to 501 (LPDVRDGLKP…GFEDLEDEDL (467 aa)) constitute a Topo IIA-type catalytic domain. The O-(5'-phospho-DNA)-tyrosine intermediate role is filled by Tyr-123. The short motif at 528 to 534 (QNRGGRG) is the GyrA-box element. Positions 811–865 (KEDAEDETNEDEQSTSTVSEDGTEQQREAVVNDETPGNAIHTEVIDSEENDEDGR) are disordered. A compositionally biased stretch (acidic residues) spans 813-823 (DAEDETNEDEQ).

It belongs to the type II topoisomerase GyrA/ParC subunit family. Heterotetramer, composed of two GyrA and two GyrB chains. In the heterotetramer, GyrA contains the active site tyrosine that forms a transient covalent intermediate with DNA, while GyrB binds cofactors and catalyzes ATP hydrolysis.

It localises to the cytoplasm. It carries out the reaction ATP-dependent breakage, passage and rejoining of double-stranded DNA.. In terms of biological role, a type II topoisomerase that negatively supercoils closed circular double-stranded (ds) DNA in an ATP-dependent manner to modulate DNA topology and maintain chromosomes in an underwound state. Negative supercoiling favors strand separation, and DNA replication, transcription, recombination and repair, all of which involve strand separation. Also able to catalyze the interconversion of other topological isomers of dsDNA rings, including catenanes and knotted rings. Type II topoisomerases break and join 2 DNA strands simultaneously in an ATP-dependent manner. The polypeptide is DNA gyrase subunit A (Staphylococcus aureus (strain MSSA476)).